Reading from the N-terminus, the 471-residue chain is 5-hydroxytryptamine receptor 2B (471 aa).

Residues Met-1–Trp-26 lie on the Extracellular side of the membrane. An N-linked (GlcNAc...) asparagine glycan is attached at Asn-12. A helical membrane pass occupies residues Ala-27 to Val-49. The Cytoplasmic portion of the chain corresponds to Trp-50–Asn-60. Residues Phe-61–Ile-83 traverse the membrane as a helical segment. Topologically, residues Thr-84 to Pro-99 are extracellular. Residues Cys-98 and Cys-182 are joined by a disulfide bond. The chain crosses the membrane as a helical span at residues Ile-100 to Leu-121. 2 residues coordinate ergotamine: Asp-105 and Thr-110. The DRY motif; important for ligand-induced conformation changes motif lies at Asp-122–Tyr-124. Over Asp-122 to Lys-141 the chain is Cytoplasmic. Residues Val-142–Ile-162 form a helical membrane-spanning segment. Topologically, residues Lys-163–Glu-191 are extracellular. 2 N-linked (GlcNAc...) asparagine glycosylation sites follow: Asn-173 and Asn-179. Leu-184 serves as a coordination point for ergotamine. The [DE]RFG motif; may stabilize a conformation that preferentially activates signaling via beta-arrestin family members motif lies at Asp-187 to Gln-190. Residues Phe-192–Leu-214 form a helical membrane-spanning segment. Over Thr-215 to Lys-308 the chain is Cytoplasmic. The chain crosses the membrane as a helical span at residues Val-309–Ile-329. Topologically, residues Thr-330–Arg-344 are extracellular. A disulfide bridge connects residues Cys-334 and Cys-337. A helical transmembrane segment spans residues Leu-345–Leu-366. Positions Asn-360–Tyr-364 match the NPxxY motif; important for ligand-induced conformation changes and signaling motif. Residues Phe-367–Val-471 lie on the Cytoplasmic side of the membrane. The S-palmitoyl cysteine moiety is linked to residue Cys-381. The PDZ-binding motif lies at Ser-469–Val-471.

The protein belongs to the G-protein coupled receptor 1 family. As to expression, detected in brain, heart and gut.

It is found in the cell membrane. The protein resides in the synapse. The protein localises to the synaptosome. In terms of biological role, G-protein coupled receptor for 5-hydroxytryptamine (serotonin). Also functions as a receptor for various ergot alkaloid derivatives and psychoactive substances. Ligand binding causes a conformation change that triggers signaling via guanine nucleotide-binding proteins (G proteins) and modulates the activity of downstream effectors. HTR2B is coupled to G(q)/G(11) G alpha proteins and activates phospholipase C-beta, releasing diacylglycerol (DAG) and inositol 1,4,5-trisphosphate (IP3) second messengers that modulate the activity of phosphatidylinositol 3-kinase and promote the release of Ca(2+) ions from intracellular stores, respectively. Beta-arrestin family members inhibit signaling via G proteins and mediate activation of alternative signaling pathways. Plays a role in the regulation of dopamine and 5-hydroxytryptamine release, 5-hydroxytryptamine uptake and in the regulation of extracellular dopamine and 5-hydroxytryptamine levels, and thereby affects neural activity. The chain is 5-hydroxytryptamine receptor 2B (htr2b) from Dichotomyctere fluviatilis (Green pufferfish).